We begin with the raw amino-acid sequence, 803 residues long: Leucine--tRNA ligase (803 aa).

The short motif at P40–H51 is the 'HIGH' region element. Positions K575–S579 match the 'KMSKS' region motif. Residue K578 participates in ATP binding.

The protein belongs to the class-I aminoacyl-tRNA synthetase family.

Its subcellular location is the cytoplasm. It catalyses the reaction tRNA(Leu) + L-leucine + ATP = L-leucyl-tRNA(Leu) + AMP + diphosphate. This is Leucine--tRNA ligase from Listeria monocytogenes serovar 1/2a (strain ATCC BAA-679 / EGD-e).